A 1576-amino-acid polypeptide reads, in one-letter code: MDFAKCIGDEFFGPVVDGCRGGFDFTLKFELLFFATIPPAIFLILAVPRIASLYSEPTIVAWRSWLYASKQILGFVNLVLQVTLLVMTTQGTAQFKLSGLFLSARIVTTSSTLLSVIVCHYEHSRCRRPSTILDVYLGLTLFLDIAHNRTLWLSVSSSLDAIFVRFHTTTVACKAVLAILESLSKKRLFVLHNRTTQSLDGTRGSYSLSTFSWLSRLLLSGYQNPLRLDSLPLLDEAMAVETLYARFLENTKGYLGESSGSDQKSRLPLSQALAKTLLLPLLLPILPRLVLIGLSISQAFLIQAVTGFLSAKNKADEVGYGLIGATILIYVGIALSTSLYWYYHQRFLYMARSCLTSGIFRKTTELSEATLAESQAITLMSTDIERVLAGFLNLHELWASLIQAVIVSWILWTRLKGFFALPVGLTVACFVALATVGRYIGGFQKTWMQETQKRVAMIASVLASMKQVKVSGLAATIDKKVQQARKTELRASHGVRMLQITAMTLSLLPELIAPVITLAATSESVATSNIFTIVALISLLTAPLGQLFQSVAPLMSGLACLDRIQTYLELEPVRERRGHNKSRLERIVDGPASSDEDYSYAFRVVNGSFRWQKDSPHCLQNVNLTVKHAAFTMIVGPVGSGKSTLCKALLGEISLSAGRVLVGKESEGKIAYCGQTPFLSNSTIRDNIVHFSQWNTSRYIEVIEASGLSYHLARLPDGHDTLVGSNGLLLSGGQRQLIAIARALYSDAHTLIFDDVLSGLDARTEDHVFRHIFGPSGLLRKRHDRPAVILCTQSVMYLPLADHIIVLSEQGDIAEQGKWEVLNSNGGYLQSLCVRDADATTPKVELGVEGESERNHWHTTESDEMRTKETLEQQLVVSENDEATVSGPASSGPSHVVAWSGGLANYRYYLKAVSVVALVAFLASAICYGFFFAFPTLWLNFWVRDATSKHRSHTNAFWVGIYGLFHALSLLGGFLTMYLAVTSISLVSGASLHSSIFAAIMRAPLSLFRTIDQGTLTNYFSQDITLVDGELPRSLIQFVCDLAISLSMAGVLAASSPYLAAMYPIAIALMYATVKLYLRTSRQLRILALEAKSPLYMHFLDVGRGIATLRAARLLKQYENQNDQLLEISQRPAYLLAMVQYWLLFILNIIVMFLAIFVVTLVTQLRNHGTGFAGSGLVMLLQFGQILASAMQSYAKLETSMGAVHRLKSLFEHVVSDTVGEKGISPPLSWPSKGYIKLDGVSASYMSTNEETDNTLGGLALRNIRLVVEPGQHVAICGRSGSGKSSLVLLLLGLLEPLQSTGCDAITIDGLDIRTIKQAVLSERIIAVSQDTIFLPAGASWQENLDLLGTCTTSEVKSVLENMNLWSLIESQDGGLTAAMKPEELSSGQKQLFSVARAVLRKRVKDREIRQASSIEIPSTSQLRLASDAQECKKTESDCEAVEGDSDLYCLPQLEPSNDTRLAAGREDVLGGVLLLDEFNSSMDLLTEQRYFNRIQSEFPGYTIIAITHSLASFIKDQECRQEGEAQVYRGGFFDRIIVLDSGMIVEDGHPTTLLETSHSKFRALCEAAARGEVST.

Transmembrane regions (helical) follow at residues 27-47, 72-92, 99-119, 267-287, 289-309, 321-341, 387-407, 417-437, 500-520, and 525-545; these read LKFE…ILAV, ILGF…TQGT, GLFL…VIVC, LPLS…PILP, LVLI…TGFL, GLIG…SLYW, VLAG…AVIV, GFFA…ATVG, ITAM…TLAA, and VATS…APLG. One can recognise an ABC transmembrane type-1 1 domain in the interval 289–556; that stretch reads LVLIGLSISQ…LFQSVAPLMS (268 aa). An ABC transporter 1 domain is found at 602–834; the sequence is FRVVNGSFRW…NGGYLQSLCV (233 aa). 636-643 serves as a coordination point for ATP; it reads GPVGSGKS. 7 consecutive transmembrane segments (helical) span residues 915-935, 957-977, 981-1001, 1035-1054, 1060-1078, 1142-1162, and 1171-1191; these read VVAL…FAFP, FWVG…FLTM, VTSI…AAIM, LIQF…VLAA, AAMY…KLYL, WLLF…VTLV, and GFAG…ASAM. Residues 919-1199 enclose the ABC transmembrane type-1 2 domain; that stretch reads VAFLASAICY…AMQSYAKLET (281 aa). Residues 1236–1567 form the ABC transporter 2 domain; the sequence is IKLDGVSASY…SHSKFRALCE (332 aa). 1278-1285 contacts ATP; sequence GRSGSGKS.

Belongs to the ABC transporter superfamily. ABCC family. Conjugate transporter (TC 3.A.1.208) subfamily.

The protein resides in the cell membrane. In terms of biological role, ABC transporter that may provide the dual role AAL-toxin export and self-protection by allowing the fungus to evade the harmful effect of its own AAL-toxin production. This Alternaria alternata (Alternaria rot fungus) protein is ABC transporter ALT5.